We begin with the raw amino-acid sequence, 165 residues long: Small ribosomal subunit protein uS5 (165 aa).

One can recognise an S5 DRBM domain in the interval 13 to 76 (LEENVVSINR…EDAKRHLIKV (64 aa)).

Belongs to the universal ribosomal protein uS5 family. Part of the 30S ribosomal subunit. Contacts proteins S4 and S8.

In terms of biological role, with S4 and S12 plays an important role in translational accuracy. Its function is as follows. Located at the back of the 30S subunit body where it stabilizes the conformation of the head with respect to the body. This chain is Small ribosomal subunit protein uS5, found in Oenococcus oeni (strain ATCC BAA-331 / PSU-1).